Reading from the N-terminus, the 104-residue chain is MVSSFFMASTLLAISSCFNSSISRAKGYNDSLESESLEFDVVDVVDVVAAEGTAPAVVDLAPDIFRSFLTTQLFFDNQIPVVIVVEISSTLVLLLSAFLRNLVP.

The N-terminal stretch at 1–25 is a signal peptide; the sequence is MVSSFFMASTLLAISSCFNSSISRA. The helical transmembrane segment at 79-99 threads the bilayer; that stretch reads IPVVIVVEISSTLVLLLSAFL.

The protein resides in the membrane. This is an uncharacterized protein from Saccharomyces cerevisiae (strain ATCC 204508 / S288c) (Baker's yeast).